The chain runs to 425 residues: Serine--tRNA ligase (425 aa).

Residue 230–232 (TAE) participates in L-serine binding. 261-263 (RSE) contributes to the ATP binding site. Glu-284 serves as a coordination point for L-serine. Residue 348 to 351 (EISS) participates in ATP binding. L-serine is bound at residue Ser-384.

This sequence belongs to the class-II aminoacyl-tRNA synthetase family. Type-1 seryl-tRNA synthetase subfamily. In terms of assembly, homodimer. The tRNA molecule binds across the dimer.

The protein resides in the cytoplasm. It catalyses the reaction tRNA(Ser) + L-serine + ATP = L-seryl-tRNA(Ser) + AMP + diphosphate + H(+). It carries out the reaction tRNA(Sec) + L-serine + ATP = L-seryl-tRNA(Sec) + AMP + diphosphate + H(+). It participates in aminoacyl-tRNA biosynthesis; selenocysteinyl-tRNA(Sec) biosynthesis; L-seryl-tRNA(Sec) from L-serine and tRNA(Sec): step 1/1. Functionally, catalyzes the attachment of serine to tRNA(Ser). Is also able to aminoacylate tRNA(Sec) with serine, to form the misacylated tRNA L-seryl-tRNA(Sec), which will be further converted into selenocysteinyl-tRNA(Sec). The polypeptide is Serine--tRNA ligase (Streptococcus thermophilus (strain ATCC BAA-491 / LMD-9)).